A 292-amino-acid chain; its full sequence is Putative pyruvate, phosphate dikinase regulatory protein (292 aa).

Residue 155–162 (GVSRSSKT) participates in ADP binding.

Belongs to the pyruvate, phosphate/water dikinase regulatory protein family. PDRP subfamily.

The catalysed reaction is N(tele)-phospho-L-histidyl/L-threonyl-[pyruvate, phosphate dikinase] + ADP = N(tele)-phospho-L-histidyl/O-phospho-L-threonyl-[pyruvate, phosphate dikinase] + AMP + H(+). It catalyses the reaction N(tele)-phospho-L-histidyl/O-phospho-L-threonyl-[pyruvate, phosphate dikinase] + phosphate + H(+) = N(tele)-phospho-L-histidyl/L-threonyl-[pyruvate, phosphate dikinase] + diphosphate. Functionally, bifunctional serine/threonine kinase and phosphorylase involved in the regulation of the pyruvate, phosphate dikinase (PPDK) by catalyzing its phosphorylation/dephosphorylation. The polypeptide is Putative pyruvate, phosphate dikinase regulatory protein (Acidiphilium cryptum (strain JF-5)).